A 74-amino-acid polypeptide reads, in one-letter code: Antimicrobial peptide HsAp2 (74 aa).

The N-terminal stretch at 1 to 21 is a signal peptide; sequence MSRRLILILVLVAMLVKTMAG. Positions 22–33 are excised as a propeptide; sequence MESKWVETTYEI. Residue Pro65 is modified to Proline amide. The propeptide occupies 69-74; that stretch reads AISEQT.

This sequence belongs to the non-disulfide-bridged peptide (NDBP) superfamily. Medium-length antimicrobial peptide (group 3) family. As to expression, expressed by the venom gland.

The protein localises to the secreted. Its subcellular location is the target cell membrane. Functionally, possesses antimicrobial activity against both Gram-negative and Gram-positive bacteria, as well as against the fungus C.tropicalis. Also possesses a relatively high hemolytic activity. May act by disrupting the integrity of the bacterial cell membrane. This is Antimicrobial peptide HsAp2 from Heterometrus spinifer (Asia giant forest scorpion).